The following is a 497-amino-acid chain: Signal recognition particle subunit SRP54 2 (497 aa).

Residues 1-295 (MVLAQLGGSI…DVKPFVSRLL (295 aa)) form a G-domain region. GTP is bound by residues 108 to 115 (GLQGSGKT), 190 to 194 (DTSGR), and 248 to 251 (TKLD). Positions 296 to 497 (GMGDLSGLMD…MLGGMGLGGD (202 aa)) are M-domain.

The protein belongs to the GTP-binding SRP family. SRP54 subfamily. Component of a signal recognition particle (SRP) complex that consists of a 7SL RNA molecule of 300 nucleotides and six protein subunits: SRP72, SRP68, SRP54, SRP19, SRP14 and SRP9.

It is found in the cytoplasm. Its subcellular location is the endoplasmic reticulum. The catalysed reaction is GTP + H2O = GDP + phosphate + H(+). In terms of biological role, component of the signal recognition particle (SRP) complex, a ribonucleoprotein complex that mediates the cotranslational targeting of secretory and membrane proteins to the endoplasmic reticulum (ER). As part of the SRP complex, associates with the SRP receptor (SR) component SRPRA to target secretory proteins to the endoplasmic reticulum membrane. Binds to the signal sequence of presecretory proteins when they emerge from the ribosomes. Displays basal GTPase activity, and stimulates reciprocal GTPase activation of the SR subunit SRPRA. Forms a guanosine 5'-triphosphate (GTP)-dependent complex with the SR subunit SRPRA. SR compaction and GTPase mediated rearrangement of SR drive SRP-mediated cotranslational protein translocation into the ER. Requires the presence of SRP9/SRP14 and/or SRP19 to stably interact with RNA. In Hordeum vulgare (Barley), this protein is Signal recognition particle subunit SRP54 2 (SRP54-2).